A 343-amino-acid chain; its full sequence is Fructose-1,6-bisphosphatase class 1 (343 aa).

Residues glutamate 90, aspartate 109, leucine 111, and aspartate 112 each contribute to the Mg(2+) site. Substrate-binding positions include 112–115 (DGSS) and asparagine 199. Glutamate 271 is a binding site for Mg(2+).

It belongs to the FBPase class 1 family. In terms of assembly, homotetramer. Requires Mg(2+) as cofactor.

Its subcellular location is the cytoplasm. The enzyme catalyses beta-D-fructose 1,6-bisphosphate + H2O = beta-D-fructose 6-phosphate + phosphate. It functions in the pathway carbohydrate biosynthesis; Calvin cycle. The sequence is that of Fructose-1,6-bisphosphatase class 1 from Rhodopseudomonas palustris (strain ATCC BAA-98 / CGA009).